The following is a 374-amino-acid chain: MAPHQKSRINRINSTRSVPLRLATGGVLATLLIGGVTAAATKKDIIVDVNGEQMSLVTMSGTVEGVLAQAGVELGDQDIVSPSLDSSISDEDTVTVRTAKQVALVVEGQIQNVTTTAVSVEDLLQEVGGITGADAVDADLSETIPESGLKVSVTKPKIISINDGGKVTYVSLAAQNVQEALELRDIELGAQDRINVPLDQQLKNNAAIQIDRVDNTEITETVSFDAEPTYVDDPEAPAGDETVVEEGAPGTKEVTRTVTTVNGQEESSTVINEVEITAAKPATISRGTKTVAANSVWDQLAQCESGGNWAINTGNGFSGGLQFHPQTWLAYGGGAFSGDASGASREQQISIAEKVQAAQGWGAWPACTASLGIR.

The N-terminal stretch at 1–40 is a signal peptide; sequence MAPHQKSRINRINSTRSVPLRLATGGVLATLLIGGVTAAA. Residues 210 to 290 enclose the G5 domain; that stretch reads IDRVDNTEIT…PATISRGTKT (81 aa). The segment at 228–252 is disordered; it reads PTYVDDPEAPAGDETVVEEGAPGTK.

The protein belongs to the transglycosylase family. Rpf subfamily. Post-translationally, glycosylated; by Pmt, by at least mannose and galactose. Other unidentified sugars may also be present. In terms of processing, may be subject to proteolytic cleavage as multiple shorter forms are detected in gels. At least 3 non-glycosylated protein isoforms of 35, 40 and 42 kDa are seen in gels.

The protein localises to the secreted. It localises to the cell surface. Factor that stimulates resuscitation of dormant cells. Has peptidoglycan (PG) hydrolytic activity. Active in the pM concentration range. Has little to no effect on actively-growing cells. PG fragments could either directly activate the resuscitation pathway of dormant bacteria or serve as a substrate for endogenous Rpf, resulting in low molecular weight products with resuscitation activity. The protein is Resuscitation-promoting factor Rpf2 (rpf2) of Corynebacterium glutamicum (strain ATCC 13032 / DSM 20300 / JCM 1318 / BCRC 11384 / CCUG 27702 / LMG 3730 / NBRC 12168 / NCIMB 10025 / NRRL B-2784 / 534).